Consider the following 83-residue polypeptide: Mu-theraphotoxin-Hhn2j 1 (83 aa).

The first 21 residues, 1–21 (MKASMFLALAGLVLLFVVGYA), serve as a signal peptide directing secretion. A propeptide spanning residues 22 to 48 (SESEEKEFPIELLSKIFAVDVFKGEER) is cleaved from the precursor. Cystine bridges form between C50-C65, C57-C70, and C64-C77. Leucine amide is present on L81.

Belongs to the neurotoxin 10 (Hwtx-1) family. 15 (Hntx-3) subfamily. As to quaternary structure, monomer. As to expression, expressed by the venom gland.

It localises to the secreted. Functionally, lethal neurotoxin. Selectively blocks tetrodotoxin-sensitive voltage-gated sodium channels (Nav). Does not affect tetrodotoxin-resistant voltage-gated sodium channels or calcium channels. This is Mu-theraphotoxin-Hhn2j 1 from Cyriopagopus hainanus (Chinese bird spider).